A 161-amino-acid polypeptide reads, in one-letter code: RNA pyrophosphohydrolase (161 aa).

The Nudix hydrolase domain occupies 6–149 (GYRPNVGIIL…KREVYRRAMR (144 aa)). A Nudix box motif is present at residues 38 to 59 (GGIKKDESPEEALFRELKEEVG).

Belongs to the Nudix hydrolase family. RppH subfamily. A divalent metal cation is required as a cofactor.

Accelerates the degradation of transcripts by removing pyrophosphate from the 5'-end of triphosphorylated RNA, leading to a more labile monophosphorylated state that can stimulate subsequent ribonuclease cleavage. This is RNA pyrophosphohydrolase from Hahella chejuensis (strain KCTC 2396).